The following is a 113-amino-acid chain: P antigen family member 3 (113 aa).

Residues Met1–Arg12 show a composition bias toward basic residues. Disordered regions lie at residues Met1–Leu61 and Ser78–Val113.

The protein belongs to the GAGE family.

This is P antigen family member 3 (PAGE3) from Homo sapiens (Human).